A 92-amino-acid chain; its full sequence is Probable Fe(2+)-trafficking protein (92 aa).

Belongs to the Fe(2+)-trafficking protein family.

In terms of biological role, could be a mediator in iron transactions between iron acquisition and iron-requiring processes, such as synthesis and/or repair of Fe-S clusters in biosynthetic enzymes. The chain is Probable Fe(2+)-trafficking protein from Shewanella sp. (strain ANA-3).